The primary structure comprises 527 residues: Glucose-6-phosphate isomerase (527 aa).

E323 serves as the catalytic Proton donor. Catalysis depends on residues H352 and K454.

This sequence belongs to the GPI family.

The protein resides in the cytoplasm. It catalyses the reaction alpha-D-glucose 6-phosphate = beta-D-fructose 6-phosphate. It participates in carbohydrate biosynthesis; gluconeogenesis. It functions in the pathway carbohydrate degradation; glycolysis; D-glyceraldehyde 3-phosphate and glycerone phosphate from D-glucose: step 2/4. Catalyzes the reversible isomerization of glucose-6-phosphate to fructose-6-phosphate. In Prochlorococcus marinus (strain MIT 9312), this protein is Glucose-6-phosphate isomerase.